A 445-amino-acid polypeptide reads, in one-letter code: 4-hydroxyphenylpyruvate dioxygenase (445 aa).

Over residues 1-11 (MGHQNAAVSEN) the composition is skewed to polar residues. Residues 1 to 20 (MGHQNAAVSENQNHDDGAAS) are disordered. VOC domains follow at residues 46–192 (RFHH…YVSY) and 223–383 (RLDH…IFTK). Fe cation-binding residues include His-226, His-308, and Glu-394.

This sequence belongs to the 4HPPD family. As to quaternary structure, homodimer. Requires Fe cation as cofactor.

The protein resides in the cytoplasm. It catalyses the reaction 3-(4-hydroxyphenyl)pyruvate + O2 = homogentisate + CO2. It participates in amino-acid degradation; L-phenylalanine degradation; acetoacetate and fumarate from L-phenylalanine: step 3/6. The protein operates within cofactor biosynthesis; prenylquinone biosynthesis. Its function is as follows. Catalyzes the conversion of 4-hydroxyphenylpyruvic acid to homogentisic acid, one of the steps in tyrosine catabolism. This chain is 4-hydroxyphenylpyruvate dioxygenase (HPD), found in Arabidopsis thaliana (Mouse-ear cress).